Consider the following 245-residue polypeptide: 1-(5-phosphoribosyl)-5-[(5-phosphoribosylamino)methylideneamino] imidazole-4-carboxamide isomerase (245 aa).

Residue Asp8 is the Proton acceptor of the active site. Asp129 serves as the catalytic Proton donor.

The protein belongs to the HisA/HisF family.

It localises to the cytoplasm. It catalyses the reaction 1-(5-phospho-beta-D-ribosyl)-5-[(5-phospho-beta-D-ribosylamino)methylideneamino]imidazole-4-carboxamide = 5-[(5-phospho-1-deoxy-D-ribulos-1-ylimino)methylamino]-1-(5-phospho-beta-D-ribosyl)imidazole-4-carboxamide. The protein operates within amino-acid biosynthesis; L-histidine biosynthesis; L-histidine from 5-phospho-alpha-D-ribose 1-diphosphate: step 4/9. This chain is 1-(5-phosphoribosyl)-5-[(5-phosphoribosylamino)methylideneamino] imidazole-4-carboxamide isomerase, found in Sinorhizobium fredii (strain NBRC 101917 / NGR234).